Consider the following 459-residue polypeptide: Cysteine--tRNA ligase (459 aa).

Residue Cys29 coordinates Zn(2+). Residues 31–41 carry the 'HIGH' region motif; it reads PTVYDRAHIGN. Residues Cys209, His234, and Glu238 each coordinate Zn(2+). The 'KMSKS' region motif lies at 266–270; that stretch reads KMSKS. Lys269 contributes to the ATP binding site.

The protein belongs to the class-I aminoacyl-tRNA synthetase family. In terms of assembly, monomer. Zn(2+) serves as cofactor.

Its subcellular location is the cytoplasm. The enzyme catalyses tRNA(Cys) + L-cysteine + ATP = L-cysteinyl-tRNA(Cys) + AMP + diphosphate. The polypeptide is Cysteine--tRNA ligase (Paramagnetospirillum magneticum (strain ATCC 700264 / AMB-1) (Magnetospirillum magneticum)).